The sequence spans 149 residues: Large ribosomal subunit protein bL9 (149 aa).

It belongs to the bacterial ribosomal protein bL9 family.

Binds to the 23S rRNA. The protein is Large ribosomal subunit protein bL9 of Mycoplasma pneumoniae (strain ATCC 29342 / M129 / Subtype 1) (Mycoplasmoides pneumoniae).